An 88-amino-acid chain; its full sequence is UPF0297 protein BLi02868/BL02032 (88 aa).

Belongs to the UPF0297 family.

The sequence is that of UPF0297 protein BLi02868/BL02032 from Bacillus licheniformis (strain ATCC 14580 / DSM 13 / JCM 2505 / CCUG 7422 / NBRC 12200 / NCIMB 9375 / NCTC 10341 / NRRL NRS-1264 / Gibson 46).